Reading from the N-terminus, the 205-residue chain is Ribosomal RNA small subunit methyltransferase G (205 aa).

Residues G73, L78, 124–125 (VE), and R139 contribute to the S-adenosyl-L-methionine site.

The protein belongs to the methyltransferase superfamily. RNA methyltransferase RsmG family.

The protein resides in the cytoplasm. The catalysed reaction is guanosine(527) in 16S rRNA + S-adenosyl-L-methionine = N(7)-methylguanosine(527) in 16S rRNA + S-adenosyl-L-homocysteine. Functionally, specifically methylates the N7 position of guanine in position 527 of 16S rRNA. The protein is Ribosomal RNA small subunit methyltransferase G of Methylobacillus flagellatus (strain ATCC 51484 / DSM 6875 / VKM B-1610 / KT).